The chain runs to 348 residues: NADH-ubiquinone oxidoreductase chain 2 (348 aa).

10 consecutive transmembrane segments (helical) span residues Ser-2–Phe-22, Trp-26–Tyr-46, Ala-55–Ile-75, Val-96–Pro-116, Leu-149–Gly-169, Ile-178–Pro-198, Ser-199–Leu-219, Thr-242–Pro-262, Ile-276–Ile-296, and Ile-323–Leu-343.

It belongs to the complex I subunit 2 family. Core subunit of respiratory chain NADH dehydrogenase (Complex I) which is composed of 45 different subunits. Interacts with TMEM242.

Its subcellular location is the mitochondrion inner membrane. It carries out the reaction a ubiquinone + NADH + 5 H(+)(in) = a ubiquinol + NAD(+) + 4 H(+)(out). Functionally, core subunit of the mitochondrial membrane respiratory chain NADH dehydrogenase (Complex I) that is believed to belong to the minimal assembly required for catalysis. Complex I functions in the transfer of electrons from NADH to the respiratory chain. The immediate electron acceptor for the enzyme is believed to be ubiquinone. This is NADH-ubiquinone oxidoreductase chain 2 from Osphranter robustus (Wallaroo).